The chain runs to 277 residues: Large ribosomal subunit protein uL2cz/uL2cy (277 aa).

Disordered stretches follow at residues 1-31 and 227-277; these read MAIHLYKTSTPSTRNGAVDSQAKSNTRNTRK and NPVD…RRSK.

It belongs to the universal ribosomal protein uL2 family. In terms of assembly, part of the 50S ribosomal subunit.

It localises to the plastid. The protein localises to the chloroplast. The polypeptide is Large ribosomal subunit protein uL2cz/uL2cy (rpl2-A) (Manihot esculenta (Cassava)).